A 729-amino-acid polypeptide reads, in one-letter code: MNPFQKNESKETLFSPVSTEEMLPRPPSPPKKSPPKIFGSSYPVSIAFIVVNEFCERFSYYGMKAVLTLYFLYFLHWNEDTSTSVYHAFSSLCYFTPILGAAIADSWLGKFKTIIYLSLVYVLGHVFKSLGAIPILGGKMLHTILSLVGLSLIALGTGGIKPCVAAFGGDQFEEEHAEARTRYFSVFYLAINAGSLISTFITPMLRGDVKCFGQDCYALAFGVPGLLMVLALVVFAMGSKMYRKPPPEGNIVAQVIKCIWFALCNRFRNRSGDLPKRQHWLDWAAEKYPKHLIADVKALTRVLFLYIPLPMFWALLDQQGSRWTLQANKMNGDLGFFVLQPDQMQVLNPFLVLIFIPLFDLVIYRLISKCRINFSSLRKMAVGMILACLAFAVAALVETKINGMIHPQPASQEIFLQVLNLADGDVKVTVLGSRNNSLLVESVSSFQNTTHYSKLHLEAKSQDLHFHLKYNSLSVHNDHSVEEKNCYQLLIHQDGESISSMLVKDTGIKPANGMAAIRFINTLHKDLNISLDTDAPLSVGKDYGVSAYRTVLRGKYPAVHCETEDKVFSLDLGQLDFGTTYLFVITNITSQGLQAWKAEDIPVNKLSIAWQLPQYVLVTAAEVMFSVTGLEFSYSQAPSSMKSVLQAAWLLTVAVGNIIVLVVAQFSGLAQWAEFVLFSCLLLVVCLIFSVMAYYYVPLKSEDTREATDKQIPAVQGNMINLETKNTRL.

The tract at residues 1–35 is disordered; sequence MNPFQKNESKETLFSPVSTEEMLPRPPSPPKKSPP. The Cytoplasmic segment spans residues 1–57; sequence MNPFQKNESKETLFSPVSTEEMLPRPPSPPKKSPPKIFGSSYPVSIAFIVVNEFCER. Ser-9 is subject to Phosphoserine. Phosphothreonine is present on Thr-12. Phosphoserine is present on Ser-28. A helical membrane pass occupies residues 58 to 78; that stretch reads FSYYGMKAVLTLYFLYFLHWN. The Extracellular segment spans residues 79-87; sequence EDTSTSVYH. A helical membrane pass occupies residues 88-108; the sequence is AFSSLCYFTPILGAAIADSWL. The Cytoplasmic segment spans residues 109 to 113; sequence GKFKT. Residues 114–134 traverse the membrane as a helical segment; sequence IIYLSLVYVLGHVFKSLGAIP. Residues 135–139 are Extracellular-facing; that stretch reads ILGGK. The helical transmembrane segment at 140 to 160 threads the bilayer; that stretch reads MLHTILSLVGLSLIALGTGGI. Residues 161–183 are Cytoplasmic-facing; that stretch reads KPCVAAFGGDQFEEEHAEARTRY. The helical transmembrane segment at 184–204 threads the bilayer; that stretch reads FSVFYLAINAGSLISTFITPM. Residues 205 to 217 lie on the Extracellular side of the membrane; that stretch reads LRGDVKCFGQDCY. The helical transmembrane segment at 218 to 238 threads the bilayer; that stretch reads ALAFGVPGLLMVLALVVFAMG. Over 239–295 the chain is Cytoplasmic; the sequence is SKMYRKPPPEGNIVAQVIKCIWFALCNRFRNRSGDLPKRQHWLDWAAEKYPKHLIAD. A helical transmembrane segment spans residues 296–316; it reads VKALTRVLFLYIPLPMFWALL. Residues 317–343 are Extracellular-facing; the sequence is DQQGSRWTLQANKMNGDLGFFVLQPDQ. Residues 344–364 form a helical membrane-spanning segment; that stretch reads MQVLNPFLVLIFIPLFDLVIY. Over 365-380 the chain is Cytoplasmic; sequence RLISKCRINFSSLRKM. The helical transmembrane segment at 381–401 threads the bilayer; it reads AVGMILACLAFAVAALVETKI. At 402-611 the chain is on the extracellular side; the sequence is NGMIHPQPAS…PVNKLSIAWQ (210 aa). The interval 402–611 is extracellular domain (ECD); the sequence is NGMIHPQPAS…PVNKLSIAWQ (210 aa). N-linked (GlcNAc...) asparagine glycosylation is found at Asn-435, Asn-448, Asn-528, and Asn-587. A helical transmembrane segment spans residues 612-632; sequence LPQYVLVTAAEVMFSVTGLEF. Topologically, residues 633–643 are cytoplasmic; the sequence is SYSQAPSSMKS. The chain crosses the membrane as a helical span at residues 644–664; it reads VLQAAWLLTVAVGNIIVLVVA. The Extracellular segment spans residues 665 to 674; the sequence is QFSGLAQWAE. The chain crosses the membrane as a helical span at residues 675–695; sequence FVLFSCLLLVVCLIFSVMAYY. At 696 to 729 the chain is on the cytoplasmic side; that stretch reads YVPLKSEDTREATDKQIPAVQGNMINLETKNTRL.

The protein belongs to the major facilitator superfamily. Proton-dependent oligopeptide transporter (POT/PTR) (TC 2.A.17) family. In terms of assembly, interacts (via extracellular domain region) with trypsin. In terms of tissue distribution, strongly expressed in kidney cortex and medulla. Also detected in brain, lung and spleen. Expressed in choroid plexus.

It localises to the apical cell membrane. Its subcellular location is the cytoplasmic vesicle. The protein localises to the phagosome membrane. It is found in the cell membrane. It carries out the reaction a dipeptide(out) + 2 H(+)(out) = a dipeptide(in) + 2 H(+)(in). It catalyses the reaction glycyl-L-leucine(out) + 2 H(+)(out) = glycyl-L-leucine(in) + 2 H(+)(in). The catalysed reaction is glycyl-L-lysine(out) + 2 H(+)(out) = glycyl-L-lysine(in) + 2 H(+)(in). The enzyme catalyses glycyl-L-glutamate(out) + 3 H(+)(out) = glycyl-L-glutamate(in) + 3 H(+)(in). It carries out the reaction L-alanyl-L-alanine(out) + 2 H(+)(out) = L-alanyl-L-alanine(in) + 2 H(+)(in). It catalyses the reaction an L-amino acid tripeptide(out) + 2 H(+)(out) = an L-amino acid tripeptide(in) + 2 H(+)(in). The catalysed reaction is N-acetyl-D-muramoyl-L-alanyl-D-isoglutamine(out) + 3 H(+)(out) = N-acetyl-D-muramoyl-L-alanyl-D-isoglutamine(in) + 3 H(+)(in). The enzyme catalyses carnosine(out) + 2 H(+)(out) = carnosine(in) + 2 H(+)(in). In terms of biological role, proton-coupled amino-acid transporter that transports oligopeptides of 2 to 4 amino acids with a preference for dipeptides. Transports neutral and anionic dipeptides with a proton to peptide stoichiometry of 2:1 or 3:1. In kidney, involved in the absorption of circulating di- and tripeptides from the glomerular filtrate. Can also transport beta-lactam antibiotics, such as the aminocephalosporin cefadroxil, and other antiviral and anticancer drugs. Transports the dipeptide-like aminopeptidase inhibitor bestatin. Also able to transport carnosine. Involved in innate immunity by promoting the detection of microbial pathogens by NOD-like receptors (NLRs). Mediates transport of bacterial peptidoglycans across the plasma membrane or, in macrophages, the phagosome membrane: catalyzes the transport of certain bacterial peptidoglycans, such as muramyl dipeptide (MDP), the NOD2 ligand. The protein is Solute carrier family 15 member 2 of Rattus norvegicus (Rat).